We begin with the raw amino-acid sequence, 372 residues long: MHNQAPIQRRKSKRIYVGNVPIGDGAPIAVQSMTNTRTTDVEATVNQIKALERVGADIVRVSVPTMDAAEAFKLIKQQVNVPLVADIHFDYRIALKVAEYGVDCLRINPGNIGNEERIRTVVDCARDKNIPIRIGVNAGSLEKDLQEKYGEPTPQALLESAMRHVDHLDRLNFDQFKVSVKASDVFLAVESYRLLAKQIEQPLHLGITEAGGARSGAVKSAIGLGLLLSEGIGDTLRVSLAADPVEEIKVGFDILKSLRIRARGINFIACPTCSRQEFDVIGTVNALEQRLEDIITPMDVSIIGCVVNGPGEALVSTLGVTGGNKKSGLYEDGVRKDRLDNDDMITQLEARIRAKASIMDEARRIDVQQVEK.

Residues Cys270, Cys273, Cys305, and Glu312 each contribute to the [4Fe-4S] cluster site.

Belongs to the IspG family. The cofactor is [4Fe-4S] cluster.

The catalysed reaction is (2E)-4-hydroxy-3-methylbut-2-enyl diphosphate + oxidized [flavodoxin] + H2O + 2 H(+) = 2-C-methyl-D-erythritol 2,4-cyclic diphosphate + reduced [flavodoxin]. Its pathway is isoprenoid biosynthesis; isopentenyl diphosphate biosynthesis via DXP pathway; isopentenyl diphosphate from 1-deoxy-D-xylulose 5-phosphate: step 5/6. In terms of biological role, converts 2C-methyl-D-erythritol 2,4-cyclodiphosphate (ME-2,4cPP) into 1-hydroxy-2-methyl-2-(E)-butenyl 4-diphosphate. The protein is 4-hydroxy-3-methylbut-2-en-1-yl diphosphate synthase (flavodoxin) of Citrobacter koseri (strain ATCC BAA-895 / CDC 4225-83 / SGSC4696).